We begin with the raw amino-acid sequence, 160 residues long: Bursicon (160 aa).

Residues 1-20 (MSVLNTFLVIVALILCYVND) form the signal peptide. Positions 38-131 (CQECQMTAVI…PLQCMCRPCG (94 aa)) constitute a CTCK domain. 5 disulfides stabilise this stretch: C41–C90, C55–C104, C65–C125, C69–C127, and C87–C130.

Heterodimer of burs and pburs.

It localises to the secreted. In terms of biological role, final heterodimeric neurohormone released at the end of the molting cycle, involved in the sclerotization (tanning) of the insect cuticle, melanization and wing spreading. In Bombyx mori (Silk moth), this protein is Bursicon.